A 388-amino-acid polypeptide reads, in one-letter code: Aldolase vrtJ (388 aa).

Lys-241 carries the N6-(pyridoxal phosphate)lysine modification.

Belongs to the threonine aldolase family. It depends on pyridoxal 5'-phosphate as a cofactor.

The protein operates within secondary metabolite biosynthesis; terpenoid biosynthesis. Functionally, aldolase; part of the gene cluster that mediates the biosynthesis of viridicatumtoxin, a tetracycline-like fungal meroterpenoid with a unique, fused spirobicyclic ring system. The first step of the pathway is the production of the malonamoyl-CoA starter unit for the polyketide synthase vrtA. The aldolase vrtJ may be involved in the synthesis of the malonamate substrate for malonamoyl-CoA synthetase vrtB. The polyketide synthase vrtA then may utilize the malonamoyl-CoA starter unit, followed by sequential condensation of eight malonyl-CoA units to form the polyketide backbone. The cyclization of the last ring could be mediated by the lactamase-like protein vrtG. The proposed post-PKS tailoring steps are a hydroxylation at C5 catalyzed the cytochrome P450 monooxygenase vrtE, a hydroxylation at C12a catalyzed by VrtH and/or VrtI, and an O-methylation by the O-methyltransferase vrtF. VrtC is then proposed to catalyze the transfer of a geranyl group synthesized by vrtD to the aromatic C ring of the tetracyclic polyketide intermediate of viridicatumtoxin to yield previridicatumtoxin. Finally, the cytochrome P450 monooxygenase vrtK catalyzes the spirocyclization of the geranyl moiety of previridicatumtoxin to afford viridicatumtoxin. This chain is Aldolase vrtJ, found in Penicillium aethiopicum.